The following is a 418-amino-acid chain: Dwarfin sma-2 (418 aa).

In terms of domain architecture, MH1 spans 8–134; it reads KKITERLKWK…YKRVHATGVL (127 aa). Zn(2+)-binding residues include cysteine 62, cysteine 107, cysteine 119, and histidine 124. Positions 222–418 constitute an MH2 domain; it reads WATVSYYELN…PTPRPISSIS (197 aa).

This sequence belongs to the dwarfin/SMAD family.

It localises to the cytoplasm. The protein resides in the nucleus. Involved in TGF-beta pathway. Plays a role in male tail tip morphogenesis. The chain is Dwarfin sma-2 from Caenorhabditis elegans.